A 445-amino-acid polypeptide reads, in one-letter code: Argininosuccinate synthase (445 aa).

ATP is bound by residues 17–25 (AFSGGLDTS) and A43. L-citrulline is bound at residue Y99. Positions 129 and 131 each coordinate ATP. 3 residues coordinate L-aspartate: T131, N135, and D136. N135 provides a ligand contact to L-citrulline. An ATP-binding site is contributed by D136. The L-citrulline site is built by R139 and S192. ATP is bound at residue D194. Residues T201, E203, and E280 each contribute to the L-citrulline site.

It belongs to the argininosuccinate synthase family. Type 2 subfamily. Homotetramer.

It is found in the cytoplasm. It catalyses the reaction L-citrulline + L-aspartate + ATP = 2-(N(omega)-L-arginino)succinate + AMP + diphosphate + H(+). Its pathway is amino-acid biosynthesis; L-arginine biosynthesis; L-arginine from L-ornithine and carbamoyl phosphate: step 2/3. This chain is Argininosuccinate synthase, found in Bordetella petrii (strain ATCC BAA-461 / DSM 12804 / CCUG 43448).